A 377-amino-acid polypeptide reads, in one-letter code: Tryptophan--tRNA ligase, mitochondrial (377 aa).

ATP-binding positions include Gln-21 and 28–31 (HLGN). The short motif at 22 to 31 (PTSSALHLGN) is the 'HIGH' region element. Asp-181 lines the L-tryptophan pocket. ATP-binding positions include 193-195 (GED), 242-246 (KMSKS), and Lys-245. The 'KMSKS' region motif lies at 242–246 (KMSKS).

Belongs to the class-I aminoacyl-tRNA synthetase family.

Its subcellular location is the mitochondrion matrix. The catalysed reaction is tRNA(Trp) + L-tryptophan + ATP = L-tryptophyl-tRNA(Trp) + AMP + diphosphate + H(+). The polypeptide is Tryptophan--tRNA ligase, mitochondrial (wars2) (Dictyostelium discoideum (Social amoeba)).